A 294-amino-acid chain; its full sequence is S-methyl-5'-thioadenosine phosphorylase (294 aa).

Residues Ser-16, 58-59, and 91-92 contribute to the phosphate site; these read RH and SA. Met-189 contacts substrate. Thr-190 lines the phosphate pocket. 213–215 is a substrate binding site; it reads DFD.

The protein belongs to the PNP/MTAP phosphorylase family. MTAP subfamily. As to quaternary structure, homohexamer. Dimer of a homotrimer.

The enzyme catalyses S-methyl-5'-thioadenosine + phosphate = 5-(methylsulfanyl)-alpha-D-ribose 1-phosphate + adenine. It carries out the reaction 5'-deoxyadenosine + phosphate = 5-deoxy-alpha-D-ribose 1-phosphate + adenine. It participates in amino-acid biosynthesis; L-methionine biosynthesis via salvage pathway; S-methyl-5-thio-alpha-D-ribose 1-phosphate from S-methyl-5'-thioadenosine (phosphorylase route): step 1/1. In terms of biological role, catalyzes the reversible phosphorylation of S-methyl-5'-thioadenosine (MTA) to adenine and 5-methylthioribose-1-phosphate. Involved in the breakdown of MTA, a major by-product of polyamine biosynthesis. Responsible for the first step in the methionine salvage pathway after MTA has been generated from S-adenosylmethionine. Has broad substrate specificity with 6-aminopurine nucleosides as preferred substrates. Also catalyzes the phosphorylation of 5'-deoxyadenosine (5'dAdo) to 5-deoxyribose 1-phosphate. Part of a bifunctional DHAP-shunt salvage pathway for SAM by-products. This chain is S-methyl-5'-thioadenosine phosphorylase, found in Rhodospirillum rubrum (strain ATCC 11170 / ATH 1.1.1 / DSM 467 / LMG 4362 / NCIMB 8255 / S1).